We begin with the raw amino-acid sequence, 291 residues long: Small ribosomal subunit biogenesis GTPase RsgA 1 (291 aa).

The region spanning 63-221 is the CP-type G domain; that stretch reads ENALVRPPVA…VADTPGFSSI (159 aa). Residues 112–115 and 164–172 each bind GTP; these read SKMD and GQSGVGKST. Residues Cys-245, Cys-250, His-252, and Cys-258 each coordinate Zn(2+).

This sequence belongs to the TRAFAC class YlqF/YawG GTPase family. RsgA subfamily. In terms of assembly, monomer. Associates with 30S ribosomal subunit, binds 16S rRNA. Zn(2+) is required as a cofactor.

It localises to the cytoplasm. One of several proteins that assist in the late maturation steps of the functional core of the 30S ribosomal subunit. Helps release RbfA from mature subunits. May play a role in the assembly of ribosomal proteins into the subunit. Circularly permuted GTPase that catalyzes slow GTP hydrolysis, GTPase activity is stimulated by the 30S ribosomal subunit. The polypeptide is Small ribosomal subunit biogenesis GTPase RsgA 1 (Listeria monocytogenes serotype 4b (strain F2365)).